A 21-amino-acid polypeptide reads, in one-letter code: Cupiennin-6c (21 aa).

Position 21 is a serine amide (Ser21).

As to expression, expressed by the venom gland.

Its subcellular location is the secreted. This chain is Cupiennin-6c, found in Cupiennius salei (American wandering spider).